The sequence spans 65 residues: Disintegrin CC5 (65 aa).

Positions M1–S65 constitute a Disintegrin domain. 4 disulfides stabilise this stretch: C7–C30, C21–C27, C26–C51, and C39–C58. The short motif at R43–D45 is the Cell attachment site element.

This sequence belongs to the disintegrin family. Dimeric disintegrin subfamily. Homodimer; disulfide-linked. As to expression, expressed by the venom gland.

It localises to the secreted. Its function is as follows. Binds and inhibits integrins alpha-IIb/beta-3 (ITGA2B/ITGB3), alpha-V/beta-3 (ITGAV/ITGB3) and alpha-5/beta-1 (ITGA5/ITGB1). The polypeptide is Disintegrin CC5 (Cerastes cerastes (Horned desert viper)).